Consider the following 1226-residue polypeptide: E3 ubiquitin-protein ligase mind-bomb (1226 aa).

The segment covering 1–12 (MSCAATLSSAKD) has biased composition (polar residues). 2 disordered regions span residues 1 to 42 (MSCA…NTNT) and 66 to 87 (GGGG…AGGV). Residues 19–30 (SGGGGGGGGGGA) are compositionally biased toward gly residues. Low complexity-rich tracts occupy residues 31 to 42 (PTNSNTNTNTNT) and 73 to 86 (GGTT…AAGG). Residues 100–168 (VRRFSMEGVG…AYDLRILDSA (69 aa)) form the MIB/HERC2 1 domain. The segment at 174–226 (HEGTMCDTCRQQPIFGIRWKCAECINYDLCSICYHGDKHHLRHRFYRITTPGG) adopts a ZZ-type zinc-finger fold. The Zn(2+) site is built by Cys-179, Cys-182, Cys-194, Cys-197, Cys-203, Cys-206, His-212, and His-216. The region spanning 237–315 (SKKVLARGIF…MADLKVVNDA (79 aa)) is the MIB/HERC2 2 domain. ANK repeat units lie at residues 567 to 596 (AGHT…DVEI), 600 to 629 (DGDR…DLNA), 633 to 662 (RRQT…HPSL), 666 to 695 (EGDT…DITL), 699 to 731 (NGFN…IVEE), 735 to 765 (DGYT…NMDR), 769 to 798 (NLQT…DLNI), and 802 to 833 (DGDT…KLLM). The interval 890-919 (TDDSELPGNVAGTSSSARARAASGSLNQSS) is disordered. A compositionally biased stretch (low complexity) spans 900–914 (AGTSSSARARAASGS). RING-type zinc fingers lie at residues 970-1005 (CLVC…LICR) and 1017-1052 (CLVC…VLCR). Residues 1159–1181 (VNNFQMDDVQKLKQQLQDIKEQT) are a coiled coil. Residues 1183 to 1216 (CPVCFDRIKNMVFLCGHGTCQMCGDQIEGCPICR) form an RING-type 3 zinc finger.

As to quaternary structure, interacts with intracellular domain of Dl and Ser. Ubiquitous in the wing imaginal disk (at protein level).

It is found in the cytoplasm. It localises to the cell cortex. It carries out the reaction S-ubiquitinyl-[E2 ubiquitin-conjugating enzyme]-L-cysteine + [acceptor protein]-L-lysine = [E2 ubiquitin-conjugating enzyme]-L-cysteine + N(6)-ubiquitinyl-[acceptor protein]-L-lysine.. The protein operates within protein modification; protein ubiquitination. E3 ubiquitin-protein ligase that mediates ubiquitination of Delta (Dl) and Serrate (Ser) receptors, which act as ligands of Notch proteins. Positively regulates the Notch signaling by ubiquitinating the intracellular domain of Dl and Ser, leading to endocytosis of Dl and Ser receptors. Regulates a subset of Notch signaling events, including wing margin specification, leg segmentation and vein determination, that are distinct from those events requiring neuralize (neur) activity. Also modulates lateral inhibition, a neur- and Dl-dependent signaling event, suggesting a distinct but partially complementary function with neur. In Drosophila melanogaster (Fruit fly), this protein is E3 ubiquitin-protein ligase mind-bomb (mib1).